A 319-amino-acid polypeptide reads, in one-letter code: Inositol-tetrakisphosphate 1-kinase 1 (319 aa).

The residue at position 2 (Ser2) is an N-acetylserine. 1D-myo-inositol 1,3,4-trisphosphate-binding residues include Lys18 and Lys60. 2 residues coordinate ATP: Arg95 and Lys145. An ATP-grasp domain is found at 99 to 318 (LEVITQLRFP…FWDMVTKKNH (220 aa)). His156 and Lys188 together coordinate 1D-myo-inositol 1,3,4-trisphosphate. ATP is bound by residues 177-188 (QEFVNHGGVIFK) and Ser203. Mg(2+) is bound by residues Asp273, Asp288, and Asn290. Residue Asn290 coordinates 1D-myo-inositol 1,3,4-trisphosphate.

Belongs to the ITPK1 family. As to quaternary structure, monomer. Requires Mg(2+) as cofactor. In terms of tissue distribution, expressed in siliques.

The enzyme catalyses 1D-myo-inositol 3,4,5,6-tetrakisphosphate + ATP = 1D-myo-inositol 1,3,4,5,6-pentakisphosphate + ADP + H(+). It catalyses the reaction 1D-myo-inositol 1,3,4-trisphosphate + ATP = 1D-myo-inositol 1,3,4,5-tetrakisphosphate + ADP + H(+). The catalysed reaction is 1D-myo-inositol 1,3,4-trisphosphate + ATP = 1D-myo-inositol 1,3,4,6-tetrakisphosphate + ADP + H(+). Its function is as follows. Kinase that can phosphorylate various inositol polyphosphate such as Ins(3,4,5,6)P4 or Ins(1,3,4)P3. Phosphorylates Ins(3,4,5,6)P4 at position 1 to form Ins(1,3,4,5,6)P5. This reaction is thought to have regulatory importance, since Ins(3,4,5,6)P4 is an inhibitor of plasma membrane Ca(2+)-activated Cl(-) channels, while Ins(1,3,4,5,6)P5 is not. Also phosphorylates Ins(1,3,4)P3 on O-5 and O-6 to form Ins(1,3,4,6)P4, an essential molecule in the hexakisphosphate (InsP6) pathway. This chain is Inositol-tetrakisphosphate 1-kinase 1 (ITPK1), found in Arabidopsis thaliana (Mouse-ear cress).